Consider the following 400-residue polypeptide: Serine/threonine transporter SstT (400 aa).

8 helical membrane-spanning segments follow: residues 14-34, 48-68, 76-96, 136-156, 177-197, 211-231, 293-313, and 334-354; these read IIIA…VTPY, SVAP…FQVG, VLLL…IASL, AISE…GLAM, IIHK…AVTF, LLAV…PILV, LAGA…TLGI, and ASGV…LFGI.

It belongs to the dicarboxylate/amino acid:cation symporter (DAACS) (TC 2.A.23) family.

It is found in the cell inner membrane. The catalysed reaction is L-serine(in) + Na(+)(in) = L-serine(out) + Na(+)(out). It catalyses the reaction L-threonine(in) + Na(+)(in) = L-threonine(out) + Na(+)(out). In terms of biological role, involved in the import of serine and threonine into the cell, with the concomitant import of sodium (symport system). This chain is Serine/threonine transporter SstT, found in Acinetobacter baumannii (strain SDF).